We begin with the raw amino-acid sequence, 413 residues long: 1-deoxy-D-xylulose 5-phosphate reductoisomerase (413 aa).

NADPH contacts are provided by threonine 13, glycine 14, serine 15, isoleucine 16, arginine 40, asparagine 41, and asparagine 127. Lysine 128 provides a ligand contact to 1-deoxy-D-xylulose 5-phosphate. NADPH is bound at residue glutamate 129. Position 153 (aspartate 153) interacts with Mn(2+). 1-deoxy-D-xylulose 5-phosphate-binding residues include serine 154, glutamate 155, serine 184, and histidine 207. Glutamate 155 is a binding site for Mn(2+). Glycine 213 provides a ligand contact to NADPH. 1-deoxy-D-xylulose 5-phosphate is bound by residues serine 220, asparagine 225, lysine 226, and glutamate 229. Glutamate 229 contacts Mn(2+).

The protein belongs to the DXR family. Mg(2+) serves as cofactor. It depends on Mn(2+) as a cofactor.

The enzyme catalyses 2-C-methyl-D-erythritol 4-phosphate + NADP(+) = 1-deoxy-D-xylulose 5-phosphate + NADPH + H(+). It functions in the pathway isoprenoid biosynthesis; isopentenyl diphosphate biosynthesis via DXP pathway; isopentenyl diphosphate from 1-deoxy-D-xylulose 5-phosphate: step 1/6. Its function is as follows. Catalyzes the NADPH-dependent rearrangement and reduction of 1-deoxy-D-xylulose-5-phosphate (DXP) to 2-C-methyl-D-erythritol 4-phosphate (MEP). The sequence is that of 1-deoxy-D-xylulose 5-phosphate reductoisomerase from Nitrosomonas europaea (strain ATCC 19718 / CIP 103999 / KCTC 2705 / NBRC 14298).